A 314-amino-acid chain; its full sequence is Ribosomal protein L11 methyltransferase (314 aa).

The S-adenosyl-L-methionine site is built by Thr152, Gly184, Asp206, and Asn248.

It belongs to the methyltransferase superfamily. PrmA family.

Its subcellular location is the cytoplasm. It catalyses the reaction L-lysyl-[protein] + 3 S-adenosyl-L-methionine = N(6),N(6),N(6)-trimethyl-L-lysyl-[protein] + 3 S-adenosyl-L-homocysteine + 3 H(+). Functionally, methylates ribosomal protein L11. This Geotalea daltonii (strain DSM 22248 / JCM 15807 / FRC-32) (Geobacter daltonii) protein is Ribosomal protein L11 methyltransferase.